Reading from the N-terminus, the 194-residue chain is Holliday junction branch migration complex subunit RuvA (194 aa).

The tract at residues Met-1 to Leu-64 is domain I. The domain II stretch occupies residues Ser-65 to Ser-140. The interval Ser-140–Lys-144 is flexible linker. The domain III stretch occupies residues Leu-145–Arg-194.

The protein belongs to the RuvA family. Homotetramer. Forms an RuvA(8)-RuvB(12)-Holliday junction (HJ) complex. HJ DNA is sandwiched between 2 RuvA tetramers; dsDNA enters through RuvA and exits via RuvB. An RuvB hexamer assembles on each DNA strand where it exits the tetramer. Each RuvB hexamer is contacted by two RuvA subunits (via domain III) on 2 adjacent RuvB subunits; this complex drives branch migration. In the full resolvosome a probable DNA-RuvA(4)-RuvB(12)-RuvC(2) complex forms which resolves the HJ.

The protein resides in the cytoplasm. The RuvA-RuvB-RuvC complex processes Holliday junction (HJ) DNA during genetic recombination and DNA repair, while the RuvA-RuvB complex plays an important role in the rescue of blocked DNA replication forks via replication fork reversal (RFR). RuvA specifically binds to HJ cruciform DNA, conferring on it an open structure. The RuvB hexamer acts as an ATP-dependent pump, pulling dsDNA into and through the RuvAB complex. HJ branch migration allows RuvC to scan DNA until it finds its consensus sequence, where it cleaves and resolves the cruciform DNA. This chain is Holliday junction branch migration complex subunit RuvA, found in Xylella fastidiosa (strain M23).